We begin with the raw amino-acid sequence, 532 residues long: Chaperonin GroEL 2 (532 aa).

ATP contacts are provided by residues 30-33 (TLGP), Lys-51, 87-91 (DGTTT), Gly-415, 479-481 (NAA), and Asp-495.

Belongs to the chaperonin (HSP60) family. In terms of assembly, forms a cylinder of 14 subunits composed of two heptameric rings stacked back-to-back. Interacts with the co-chaperonin GroES.

Its subcellular location is the cytoplasm. It catalyses the reaction ATP + H2O + a folded polypeptide = ADP + phosphate + an unfolded polypeptide.. Together with its co-chaperonin GroES, plays an essential role in assisting protein folding. The GroEL-GroES system forms a nano-cage that allows encapsulation of the non-native substrate proteins and provides a physical environment optimized to promote and accelerate protein folding. This chain is Chaperonin GroEL 2, found in Vibrio parahaemolyticus serotype O3:K6 (strain RIMD 2210633).